The chain runs to 382 residues: S-adenosylmethionine synthase (382 aa).

H16 is a binding site for ATP. D18 is a binding site for Mg(2+). Residue E44 participates in K(+) binding. Residues E57 and Q100 each contribute to the L-methionine site. The segment at 100–110 (QSPDIAQGVDN) is flexible loop. ATP is bound by residues 165 to 167 (DAK), 231 to 232 (RF), D240, 246 to 247 (RK), and K267. D240 lines the L-methionine pocket. K271 is an L-methionine binding site.

It belongs to the AdoMet synthase family. In terms of assembly, homotetramer; dimer of dimers. Mg(2+) serves as cofactor. The cofactor is K(+).

The protein resides in the cytoplasm. It catalyses the reaction L-methionine + ATP + H2O = S-adenosyl-L-methionine + phosphate + diphosphate. Its pathway is amino-acid biosynthesis; S-adenosyl-L-methionine biosynthesis; S-adenosyl-L-methionine from L-methionine: step 1/1. In terms of biological role, catalyzes the formation of S-adenosylmethionine (AdoMet) from methionine and ATP. The overall synthetic reaction is composed of two sequential steps, AdoMet formation and the subsequent tripolyphosphate hydrolysis which occurs prior to release of AdoMet from the enzyme. In Legionella pneumophila (strain Lens), this protein is S-adenosylmethionine synthase.